Here is a 138-residue protein sequence, read N- to C-terminus: Small ribosomal subunit protein uS11 (138 aa).

Residues 1-12 show a composition bias toward low complexity; it reads MAPKKPGAAGPK. 2 disordered regions span residues 1–27 and 119–138; these read MAPK…NVPH and ISDV…RRRV. Residues 13 to 22 are compositionally biased toward basic residues; sequence KAQKTRRREK.

The protein belongs to the universal ribosomal protein uS11 family. As to quaternary structure, part of the 30S ribosomal subunit. Interacts with proteins S7 and S18. Binds to IF-3.

Located on the platform of the 30S subunit, it bridges several disparate RNA helices of the 16S rRNA. Forms part of the Shine-Dalgarno cleft in the 70S ribosome. The sequence is that of Small ribosomal subunit protein uS11 from Mycobacteroides abscessus (strain ATCC 19977 / DSM 44196 / CCUG 20993 / CIP 104536 / JCM 13569 / NCTC 13031 / TMC 1543 / L948) (Mycobacterium abscessus).